A 248-amino-acid chain; its full sequence is Uridylate kinase (248 aa).

Residue 13-16 coordinates ATP; sequence KLSG. A UMP-binding site is contributed by glycine 55. Positions 56 and 60 each coordinate ATP. Residues aspartate 75 and 136–143 each bind UMP; that span reads TGNPYFTT. 3 residues coordinate ATP: threonine 163, tyrosine 169, and aspartate 172.

The protein belongs to the UMP kinase family. In terms of assembly, homohexamer.

The protein localises to the cytoplasm. The enzyme catalyses UMP + ATP = UDP + ADP. It participates in pyrimidine metabolism; CTP biosynthesis via de novo pathway; UDP from UMP (UMPK route): step 1/1. Its activity is regulated as follows. Inhibited by UTP. Functionally, catalyzes the reversible phosphorylation of UMP to UDP. This Leptospira interrogans serogroup Icterohaemorrhagiae serovar copenhageni (strain Fiocruz L1-130) protein is Uridylate kinase.